A 249-amino-acid chain; its full sequence is Small ribosomal subunit protein uS3 (249 aa).

Residues Ile38–Lys106 form the KH type-2 domain. Over residues Ala218–Arg233 the composition is skewed to basic and acidic residues. Positions Ala218–Gly249 are disordered.

This sequence belongs to the universal ribosomal protein uS3 family. As to quaternary structure, part of the 30S ribosomal subunit. Forms a tight complex with proteins S10 and S14.

Its function is as follows. Binds the lower part of the 30S subunit head. Binds mRNA in the 70S ribosome, positioning it for translation. This Corynebacterium kroppenstedtii (strain DSM 44385 / JCM 11950 / CIP 105744 / CCUG 35717) protein is Small ribosomal subunit protein uS3.